Consider the following 283-residue polypeptide: MPRPPVVARTLPALRRALDDLRRRNATVALVPTMGALHDGHLSLVRLAKRRAAKVVVSVFVNPTQFAPHEDFGSYPRTWKADVAKLAAENVDLIWNPDVKTMYPEGFATRIGVDGPAIAGLEDRFRPHFFGGVATVVGKLFLQVRPDVAIFGSKDFQQLRVVTRMAADLDLGVKVIGAPTIRERDGLAMSSRNVYLTPEQRQVAPTLYRAMKETAKLLKAGRSAEAALAAGAKMITDAGFALDYLEARHAESLAPVGSIKDGPIRLLVAAKLGNTRLIDNVAV.

34–41 (MGALHDGH) is an ATP binding site. H41 serves as the catalytic Proton donor. Residue Q65 coordinates (R)-pantoate. A beta-alanine-binding site is contributed by Q65. Position 152 to 155 (152 to 155 (GSKD)) interacts with ATP. Q158 contacts (R)-pantoate. ATP is bound by residues I181 and 189-192 (MSSR).

The protein belongs to the pantothenate synthetase family. In terms of assembly, homodimer.

The protein resides in the cytoplasm. The catalysed reaction is (R)-pantoate + beta-alanine + ATP = (R)-pantothenate + AMP + diphosphate + H(+). It participates in cofactor biosynthesis; (R)-pantothenate biosynthesis; (R)-pantothenate from (R)-pantoate and beta-alanine: step 1/1. Functionally, catalyzes the condensation of pantoate with beta-alanine in an ATP-dependent reaction via a pantoyl-adenylate intermediate. The protein is Pantothenate synthetase of Rhodopseudomonas palustris (strain HaA2).